The sequence spans 415 residues: Ribulose bisphosphate carboxylase large chain (415 aa).

Residues asparagine 101 and threonine 151 each contribute to the substrate site. Lysine 153 serves as the catalytic Proton acceptor. Position 155 (lysine 155) interacts with substrate. Mg(2+) contacts are provided by lysine 179, aspartate 181, and glutamate 182. Lysine 179 is modified (N6-carboxylysine). The active-site Proton acceptor is the histidine 272. Positions 273, 305, and 357 each coordinate substrate.

It belongs to the RuBisCO large chain family. Type I subfamily. Heterohexadecamer of 8 large chains and 8 small chains; disulfide-linked. The disulfide link is formed within the large subunit homodimers. It depends on Mg(2+) as a cofactor. Post-translationally, the disulfide bond which can form in the large chain dimeric partners within the hexadecamer appears to be associated with oxidative stress and protein turnover.

Its subcellular location is the plastid. The protein localises to the chloroplast. The catalysed reaction is 2 (2R)-3-phosphoglycerate + 2 H(+) = D-ribulose 1,5-bisphosphate + CO2 + H2O. It carries out the reaction D-ribulose 1,5-bisphosphate + O2 = 2-phosphoglycolate + (2R)-3-phosphoglycerate + 2 H(+). Its function is as follows. RuBisCO catalyzes two reactions: the carboxylation of D-ribulose 1,5-bisphosphate, the primary event in carbon dioxide fixation, as well as the oxidative fragmentation of the pentose substrate in the photorespiration process. Both reactions occur simultaneously and in competition at the same active site. The protein is Ribulose bisphosphate carboxylase large chain of Cibotium barometz (Scythian lamb).